Reading from the N-terminus, the 1493-residue chain is Protein RNA-directed DNA methylation 3 (1493 aa).

2 disordered regions span residues 1-34 and 54-96; these read MDRK…EGLR and GYYG…SSFV. Positions 21 to 28 match the Nuclear localization signal motif; that stretch reads KRKNSVEF. Positions 24–34 are enriched in basic and acidic residues; sequence NSVEFRDEGLR. Acidic residues predominate over residues 60 to 80; that stretch reads SDEDDDGLGFLNDMEDEPEVE. Basic and acidic residues predominate over residues 81 to 92; the sequence is ESSKAGKGEKGK. Residues 239–266 enclose the KOW 1 domain; sequence KVSEGTWARVKNGKYKGDLAQIVAVSDT. The tract at residues 393–432 is disordered; the sequence is PTCREGGKGEGSGGGKGEGSGGGKGEGSRGGKGEGSSDFK. Gly residues predominate over residues 401–417; the sequence is GEGSGGGKGEGSGGGKG. The segment covering 418-432 has biased composition (basic and acidic residues); that stretch reads EGSRGGKGEGSSDFK. The region spanning 501 to 528 is the KOW 2 domain; it reads QISVNDVVKISKGPSEGKQGVVRQVYRG. Residues 578–602 form a disordered region; it reads SSPKSPLSPEKEWQPRERYNSSNQG. Positions 586-596 are enriched in basic and acidic residues; sequence PEKEWQPRERY. The region spanning 607 to 634 is the KOW 3 domain; the sequence is TYSIGQKLRIRVGPLKGYLCRVIALRYS. Disordered regions lie at residues 692–711, 728–747, and 757–1493; these read IGAG…PSTD, EKNP…TVAD, and AAEN…KTGW. Copy 1 of the repeat occupies 732-741; it reads WGGSKPTSDV. The tract at residues 732-1493 is 42 X 9 AA approximate WG/GW-rich tandem repeats; the sequence is WGGSKPTSDV…WGTGDKKTGW (762 aa). Positions 757-767 are enriched in low complexity; it reads AAENKPASASD. 37 tandem repeats follow at residues 775 to 784, 789 to 797, 818 to 827, 836 to 845, 854 to 863, 866 to 875, 883 to 892, 917 to 926, 935 to 943, 944 to 953, 954 to 962, 963 to 972, 978 to 987, 1003 to 1012, 1013 to 1022, 1023 to 1032, 1033 to 1042, 1043 to 1052, 1053 to 1062, 1063 to 1072, 1073 to 1082, 1132 to 1141, 1144 to 1153, 1156 to 1165, 1167 to 1176, 1180 to 1189, 1192 to 1201, 1204 to 1213, 1217 to 1226, 1229 to 1238, 1241 to 1250, 1253 to 1262, 1266 to 1275, 1278 to 1287, 1290 to 1299, 1302 to 1311, and 1314 to 1323. Positions 790-812 are enriched in polar residues; it reads GDTSASNVEASSWEKQGASTSNV. Over residues 846–860 the composition is skewed to basic and acidic residues; that stretch reads SQKKEESSWGKKGGS. Polar residues predominate over residues 866–875; sequence WGNKDGNSSA. The span at 955-1090 shows a compositional bias: basic and acidic residues; the sequence is GKKDDGGSWG…YSEQTFDRGG (136 aa). Residues 1122 to 1134 are compositionally biased toward low complexity; that stretch reads PWSKPSGGSSWGK. The segment covering 1156 to 1172 has biased composition (polar residues); that stretch reads WGKQDNGVGSSWGKQND. Residues 1186 to 1213 show a composition bias toward gly residues; the sequence is AGGGSSWGKQDSGGDGSSWGKQDGGGDS. Over residues 1218–1231 the composition is skewed to polar residues; sequence GKQNNTSGGSSWGK. Positions 1235-1264 are enriched in gly residues; it reads AGGGSSWGKQDGGGGGSSWGKQDGGGGSGS. The segment covering 1270–1283 has biased composition (polar residues); sequence NETSNGSSWGKQND. The span at 1284 to 1321 shows a compositional bias: gly residues; it reads SGGGSSWGKQDGGGGGSSWGKQNDGGGGSSWGKQGDGG. 2 stretches are compositionally biased toward polar residues: residues 1366–1382 and 1392–1401; these read WKTD…QSGG and DSNNSKPSGS. Repeat unit 39 spans residues 1389–1398; sequence WGEDSNNSKP. A compositionally biased stretch (basic and acidic residues) spans 1416–1430; it reads NSKKETNDKPGDDSK. Residues 1432–1442 show a composition bias toward polar residues; that stretch reads AWGTSNDQVNT. 3 repeat units span residues 1433 to 1442, 1467 to 1475, and 1484 to 1493.

In terms of assembly, interacts with AGO4 via its C-terminal region and with RNA transcripts. Binds chromatin at loci subject to transcriptional silencing downstream of RNA Polymerase V, but independently from the presence of 24-nt siRNA.

The protein localises to the nucleus. Its subcellular location is the nucleoplasm. Its function is as follows. Effector of RNA-directed DNA methylation (RdDM) triggered by small interfering RNAs (siRNAs, 24-nt RNAs). Functions as an adapter protein that binds scaffold transcripts generated by polymerase V and recruits AGO4 and AGO4-bound siRNAs to form an RdDM effector complex. Promotes the expression of 24-nt RNAs. Required for the initial establishment of DNA methylation. Together with AGO4, required for transcriptional gene silencing (TGS) by DNA methylation and repressive histone modifications (H3K9me2) of several chromatin loci. In Arabidopsis thaliana (Mouse-ear cress), this protein is Protein RNA-directed DNA methylation 3.